The sequence spans 408 residues: Transmembrane protein 237 (408 aa).

A compositionally biased stretch (basic and acidic residues) spans 1-14; sequence MRTDSGARLEEGHL. The segment at 1-137 is disordered; that stretch reads MRTDSGARLE…RRKTKKTQPA (137 aa). 2 positions are modified to phosphoserine: Ser-25 and Ser-49. Basic and acidic residues predominate over residues 60–77; the sequence is RPSEGNEPSTKELKEHPE. Low complexity predominate over residues 95-106; sequence TSSTQKKSSSSS. Helical transmembrane passes span 227–247, 268–288, 303–323, and 358–378; these read MIGLFSHGFLAGCAVWNIVVI, LAYPFQSLLYLLLALSTISAF, FLALDPTALASFLYFTALILS, and WIVVNLVVALLVGLSWLFLSY.

The protein belongs to the TMEM237 family. Part of the tectonic-like complex (also named B9 complex). Interacts with TMEM107.

Its subcellular location is the membrane. The protein resides in the cell projection. It localises to the cilium. In terms of biological role, component of the transition zone in primary cilia. Required for ciliogenesis. The chain is Transmembrane protein 237 (TMEM237) from Homo sapiens (Human).